Reading from the N-terminus, the 226-residue chain is PKHD-type hydroxylase HNE_2117 (226 aa).

Positions 78–178 (TVLTPRFNRY…RLASFLWTQS (101 aa)) constitute a Fe2OG dioxygenase domain. His-96, Asp-98, and His-159 together coordinate Fe cation. A 2-oxoglutarate-binding site is contributed by Arg-169.

Requires Fe(2+) as cofactor. It depends on L-ascorbate as a cofactor.

The sequence is that of PKHD-type hydroxylase HNE_2117 from Hyphomonas neptunium (strain ATCC 15444).